We begin with the raw amino-acid sequence, 237 residues long: NSLVIVVGGRPCKINVHRSLVLLYNSSSLLCSGTLINQEWVLTAAHCDSKNFKMKLGVHSIKIRNKNERTRHPKEKFICPNRKKDDVLDKDIMLIRLNRPVSNSEHIAPLSLPSSPPSVGSVCYVMGWGKISSTKETYPDVPHCAKINILDHAVCRAAYTWWPATSTTLCAGILQGGKDTCEGDSGGPLICNGLQGIVSGGGNPCGQPRKPALYTKVFDYLPWIESIIAGTTTATCP.

Residues 1–5 (NSLVI) constitute a propeptide that is removed on maturation. Positions 6–229 (VVGGRPCKIN…YLPWIESIIA (224 aa)) constitute a Peptidase S1 domain. Disulfide bonds link cysteine 12-cysteine 144, cysteine 31-cysteine 47, cysteine 79-cysteine 236, cysteine 123-cysteine 191, cysteine 155-cysteine 170, and cysteine 181-cysteine 205. N-linked (GlcNAc...) asparagine glycosylation is present at asparagine 25. Residue serine 28 is glycosylated (O-linked (GalNAc...) serine). Active-site charge relay system residues include histidine 46 and aspartate 91. The active-site Charge relay system is serine 185.

It belongs to the peptidase S1 family. Snake venom subfamily. As to quaternary structure, monomer. In terms of tissue distribution, expressed by the venom gland.

It is found in the secreted. Inhibited by PMSF. The amidolytic activity is also inhibited by benzamidine derivatives. In terms of biological role, snake venom serine protease that induces platelet aggregation through activation of protease-activated platelet receptors (PAR1/F2R and PAR4/F2RL3). On F2R, the cleavage occurs at Arg41-Ser42 (like thrombin cleavage), and Arg46-Asn47. In normal condition of hemostasis, the cleavage of the Arg41-Ser42 bond liberates a new N-terminus that functions as an agonist. However after envenomation, the cleavage of Arg46-Asn47 bond degrades this potential agonist. This may explain why the snake protease is less potent than thrombin in causing platelet aggregation and release reaction. On F2RL3, a thrombin-like activity has also been proven by calcium release from lung fibroblasts transfected with this receptor. Possesses amidolytic activities. This chain is Platelet-aggregating proteinase PA-BJ, found in Bothrops jararaca (Jararaca).